We begin with the raw amino-acid sequence, 310 residues long: uncharacterized protein (310 aa).

The tract at residues 1 to 70 is disordered; the sequence is MAGNSQRRGA…ARGRTDETET (70 aa). Positions 49 to 62 are enriched in basic residues; the sequence is AAKRAKAQQRRPAR. The S-adenosyl-L-methionine site is built by G262, V282, and L291.

It belongs to the class IV-like SAM-binding methyltransferase superfamily. RNA methyltransferase TrmH family.

This is an uncharacterized protein from Mycobacterium ulcerans (strain Agy99).